The primary structure comprises 117 residues: Large ribosomal subunit protein bL20c (117 aa).

This sequence belongs to the bacterial ribosomal protein bL20 family.

It localises to the plastid. Its subcellular location is the chloroplast. In terms of biological role, binds directly to 23S ribosomal RNA and is necessary for the in vitro assembly process of the 50S ribosomal subunit. It is not involved in the protein synthesizing functions of that subunit. This chain is Large ribosomal subunit protein bL20c, found in Acorus calamus (Sweet flag).